The chain runs to 917 residues: Probable dipeptidyl-aminopeptidase B (917 aa).

The interval 1–75 (MTVGRRLNDE…KYRDDVEEDW (75 aa)) is disordered. The Cytoplasmic portion of the chain corresponds to 1 to 93 (MTVGRRLNDE…NAKPSQRRTQ (93 aa)). The span at 27 to 39 (DSSSTASVSLTLV) shows a compositional bias: low complexity. The segment covering 40–49 (DGTNHTTAKP) has biased composition (polar residues). Over residues 57–69 (VSRDRYADEKYRD) the composition is skewed to basic and acidic residues. Residues 94-114 (IVFWLLVALCVGGWAVAFLFF) traverse the membrane as a helical; Signal-anchor for type II membrane protein segment. Topologically, residues 115–917 (VTSPGNTIST…KRVIRRLLHR (803 aa)) are vacuolar. Residues 124 to 133 (TTPDTGSGSP) show a composition bias toward polar residues. A disordered region spans residues 124–150 (TTPDTGSGSPDSDVIKPGSPPAGKKIP). Asparagine 206, asparagine 302, and asparagine 354 each carry an N-linked (GlcNAc...) asparagine glycan. The Charge relay system role is filled by serine 759. Asparagine 818 is a glycosylation site (N-linked (GlcNAc...) asparagine). Residues aspartate 836 and histidine 869 each act as charge relay system in the active site.

It belongs to the peptidase S9B family.

It is found in the vacuole membrane. It carries out the reaction Release of an N-terminal dipeptide, Xaa-Yaa-|-Zaa-, from a polypeptide, preferentially when Yaa is Pro, provided Zaa is neither Pro nor hydroxyproline.. In terms of biological role, type IV dipeptidyl-peptidase which removes N-terminal dipeptides sequentially from polypeptides having unsubstituted N-termini provided that the penultimate residue is proline. The sequence is that of Probable dipeptidyl-aminopeptidase B (DAPB) from Arthroderma gypseum (strain ATCC MYA-4604 / CBS 118893) (Microsporum gypseum).